Reading from the N-terminus, the 384-residue chain is Probable tRNA-splicing endonuclease subunit sen54 (384 aa).

Positions 37 to 57 (GTYTIPKRGQKDFEPDGTNKQ) are disordered. The segment covering 45–55 (GQKDFEPDGTN) has biased composition (basic and acidic residues).

Belongs to the SEN54 family. In terms of assembly, tRNA splicing endonuclease is a heterotetramer composed of sen2, sen15, sen34 and sen54. Interacts directly with sen2.

Its function is as follows. Non-catalytic subunit of the tRNA-splicing endonuclease complex, a complex responsible for identification and cleavage of the splice sites in pre-tRNA. It cleaves pre-tRNA at the 5' and 3' splice sites to release the intron. The products are an intron and two tRNA half-molecules bearing 2',3' cyclic phosphate and 5'-OH termini. There are no conserved sequences at the splice sites, but the intron is invariably located at the same site in the gene, placing the splice sites an invariant distance from the constant structural features of the tRNA body. May be required to embody the molecular ruler of the complex. This Schizosaccharomyces pombe (strain 972 / ATCC 24843) (Fission yeast) protein is Probable tRNA-splicing endonuclease subunit sen54 (sen54).